The chain runs to 597 residues: Protein unc-93 homolog B1 (597 aa).

Residues 1–29 are disordered; the sequence is MEAEPPLYPMAGAAGPQGDEDLLGVPDGP. Transmembrane regions (helical) follow at residues 64–84, 110–130, 132–152, 160–180, and 223–243; these read VLAA…LLQM, KMLM…PVLI, FFGT…FVST, TLVP…ASMG, and IFYS…IYFL. Asn-251 and Asn-272 each carry an N-linked (GlcNAc...) asparagine glycan. The next 5 helical transmembrane spans lie at 285-305, 343-363, 378-398, 403-423, and 428-448; these read LIVV…LVLG, LVPF…GIAL, LLVA…LGLW, VPLV…FFWA, and VLQH…GSAL. An N-linked (GlcNAc...) asparagine glycan is attached at Asn-449. A run of 2 helical transmembrane segments spans residues 469–489 and 491–511; these read FIFT…YLGS and LHMK…AVSY. The segment at 522 to 597 is disordered; that stretch reads VAPRQPRIPR…AQGGDGPEEQ (76 aa). Phosphoserine is present on residues Ser-547 and Ser-550.

The protein belongs to the unc-93 family. Interacts with TLR3, TLR5, TLR7, and TLR9 (probably via transmembrane domain). In terms of processing, N-glycosylated. Expressed in plasmocytoid dendritic cells (at protein level). Highly expressed in antigen-presenting cells. Expressed in heart, and at lower level in kidney. Expressed at low level in other tissues.

The protein resides in the endoplasmic reticulum membrane. The protein localises to the endosome. It localises to the lysosome. Its subcellular location is the cytoplasmic vesicle. It is found in the phagosome. Functionally, plays an important role in innate and adaptive immunity by regulating nucleotide-sensing Toll-like receptor (TLR) signaling. Required for the transport of a subset of TLRs (including TLR3, TLR7 and TLR9) from the endoplasmic reticulum to endolysosomes where they can engage pathogen nucleotides and activate signaling cascades. May play a role in autoreactive B-cells removal. This Homo sapiens (Human) protein is Protein unc-93 homolog B1.